We begin with the raw amino-acid sequence, 286 residues long: ATP synthase gamma chain (286 aa).

It belongs to the ATPase gamma chain family. In terms of assembly, F-type ATPases have 2 components, CF(1) - the catalytic core - and CF(0) - the membrane proton channel. CF(1) has five subunits: alpha(3), beta(3), gamma(1), delta(1), epsilon(1). CF(0) has three main subunits: a, b and c.

It localises to the cell inner membrane. Functionally, produces ATP from ADP in the presence of a proton gradient across the membrane. The gamma chain is believed to be important in regulating ATPase activity and the flow of protons through the CF(0) complex. This is ATP synthase gamma chain from Shewanella woodyi (strain ATCC 51908 / MS32).